Here is a 169-residue protein sequence, read N- to C-terminus: Acetolactate synthase small subunit (169 aa).

Positions 8 to 85 (TLSVLVEDTP…KVVEQEADNS (78 aa)) constitute an ACT domain.

It belongs to the acetolactate synthase small subunit family. As to quaternary structure, dimer of large and small chains.

The catalysed reaction is 2 pyruvate + H(+) = (2S)-2-acetolactate + CO2. Its pathway is amino-acid biosynthesis; L-isoleucine biosynthesis; L-isoleucine from 2-oxobutanoate: step 1/4. It participates in amino-acid biosynthesis; L-valine biosynthesis; L-valine from pyruvate: step 1/4. This chain is Acetolactate synthase small subunit (ilvH), found in Mycobacterium leprae (strain TN).